The primary structure comprises 118 residues: Co-chaperonin GroES (118 aa).

The protein belongs to the GroES chaperonin family. Heptamer of 7 subunits arranged in a ring. Interacts with the chaperonin GroEL.

It is found in the cytoplasm. In terms of biological role, together with the chaperonin GroEL, plays an essential role in assisting protein folding. The GroEL-GroES system forms a nano-cage that allows encapsulation of the non-native substrate proteins and provides a physical environment optimized to promote and accelerate protein folding. GroES binds to the apical surface of the GroEL ring, thereby capping the opening of the GroEL channel. The polypeptide is Co-chaperonin GroES (Helicobacter pylori (strain HPAG1)).